A 211-amino-acid polypeptide reads, in one-letter code: Small ribosomal subunit protein uS4 (211 aa).

The S4 RNA-binding domain occupies 99–160 (RRLDSVVYQM…KSRNIQQVRE (62 aa)).

Belongs to the universal ribosomal protein uS4 family. As to quaternary structure, part of the 30S ribosomal subunit. Contacts protein S5. The interaction surface between S4 and S5 is involved in control of translational fidelity.

One of the primary rRNA binding proteins, it binds directly to 16S rRNA where it nucleates assembly of the body of the 30S subunit. Functionally, with S5 and S12 plays an important role in translational accuracy. The protein is Small ribosomal subunit protein uS4 of Petrotoga mobilis (strain DSM 10674 / SJ95).